A 314-amino-acid chain; its full sequence is Ribosomal protein uL3 glutamine methyltransferase (314 aa).

This sequence belongs to the protein N5-glutamine methyltransferase family. PrmB subfamily.

The enzyme catalyses L-glutaminyl-[ribosomal protein uL3] + S-adenosyl-L-methionine = N(5)-methyl-L-glutaminyl-[ribosomal protein uL3] + S-adenosyl-L-homocysteine + H(+). In terms of biological role, methylates large ribosomal subunit protein uL3 on a specific glutamine residue. This chain is Ribosomal protein uL3 glutamine methyltransferase, found in Vibrio cholerae serotype O1 (strain ATCC 39315 / El Tor Inaba N16961).